The chain runs to 310 residues: MSVKNGLVQLENLTSMENLSIDEVMGLIKRASAFKAGKADFALDEQTFASNLFFENSTRTHHSFHIAERKLGLDVLEFDAQASSISKGETLYDTVLTLDALGVDICVIRSGVEHYYEELVNSDNIHCAIVNGGDGSGQHPSQCLLDLMTIYEEFGKFEGLKIAISGDLTHSRVAKSNMMMLQKLGARLYFTGPAAWYSEEFDDYGHYANLDRILPELDVHMLLRVQHERHDSGESFSKEGYHTHFGLTQERAKMLKPTAIIMHPAPVNRDVEIADSLVESPQSRIVQQMSNGVYTRMAILEAILAGKKAK.

Carbamoyl phosphate contacts are provided by Arg-59 and Thr-60. Residue Lys-87 coordinates L-aspartate. Carbamoyl phosphate-binding residues include Arg-109, His-139, and Gln-142. Residues Arg-172 and Arg-224 each contribute to the L-aspartate site. Carbamoyl phosphate-binding residues include Ala-265 and Pro-266.

This sequence belongs to the aspartate/ornithine carbamoyltransferase superfamily. ATCase family. In terms of assembly, heterododecamer (2C3:3R2) of six catalytic PyrB chains organized as two trimers (C3), and six regulatory PyrI chains organized as three dimers (R2).

It carries out the reaction carbamoyl phosphate + L-aspartate = N-carbamoyl-L-aspartate + phosphate + H(+). The protein operates within pyrimidine metabolism; UMP biosynthesis via de novo pathway; (S)-dihydroorotate from bicarbonate: step 2/3. In terms of biological role, catalyzes the condensation of carbamoyl phosphate and aspartate to form carbamoyl aspartate and inorganic phosphate, the committed step in the de novo pyrimidine nucleotide biosynthesis pathway. The sequence is that of Aspartate carbamoyltransferase catalytic subunit from Lactococcus lactis subsp. cremoris (strain MG1363).